Consider the following 766-residue polypeptide: Single-minded homolog 1 (766 aa).

The 53-residue stretch at 1-53 (MKEKSKNAARTRREKENSEFYELAKLLPLPSAITSQLDKASIIRLTTSYLKMR) folds into the bHLH domain. PAS domains follow at residues 77–147 (GREL…QPYH) and 218–288 (PPSA…LVKG). Residues 292-335 (TKYYRFLAKHGGWVWVQSYATIVHNSRSSRPHCIVSVNYVLTDT) enclose the PAC domain. The Single-minded C-terminal domain maps to 336–766 (EYKGLQLSLD…GTSVIITNGS (431 aa)). Positions 353–365 (AFSYTSSSTPTMT) are enriched in polar residues. Disordered stretches follow at residues 353 to 431 (AFSY…SQHD), 528 to 563 (WDEDSVVSSPDPGSASESGDRYRTEQYQSSPHEPSK), and 642 to 662 (SPRENDYDNSPTALSRISSPN). The short motif at 368-387 (RKGAKSRLSSSKSKSRTSPY) is the Nuclear localization signal element. Residues 373-385 (SRLSSSKSKSRTS) are compositionally biased toward low complexity. Basic and acidic residues predominate over residues 394–404 (HTERSESDHDS). Positions 649-662 (DNSPTALSRISSPN) are enriched in polar residues.

In terms of assembly, efficient DNA binding requires dimerization with another bHLH protein. Heterodimer; forms a heterodimer with ARNT, ARNT2.

The protein localises to the nucleus. In terms of biological role, transcriptional factor that may have pleiotropic effects during embryogenesis and in the adult. This chain is Single-minded homolog 1 (SIM1), found in Pan troglodytes (Chimpanzee).